A 194-amino-acid polypeptide reads, in one-letter code: Small ribosomal subunit protein uS4c (194 aa).

One can recognise an S4 RNA-binding domain in the interval 82–143 (MRLDNILFRL…KERSKVLIQN (62 aa)).

This sequence belongs to the universal ribosomal protein uS4 family. Part of the 30S ribosomal subunit. Contacts protein S5. The interaction surface between S4 and S5 is involved in control of translational fidelity.

Its subcellular location is the plastid. It is found in the chloroplast. Functionally, one of the primary rRNA binding proteins, it binds directly to 16S rRNA where it nucleates assembly of the body of the 30S subunit. Its function is as follows. With S5 and S12 plays an important role in translational accuracy. This chain is Small ribosomal subunit protein uS4c (rps4), found in Cypella sp. (strain Porto Alegre 027).